The following is an 82-amino-acid chain: Delta-conotoxin-like CnVIA (82 aa).

A signal peptide spans 1 to 22; it reads MKLTCMMIVAVLFLTAWTFVTA. Residues 23 to 49 constitute a propeptide that is removed on maturation; sequence DDSRNGLENLSPKARHEMKNPEASKSN. 3 cysteine pairs are disulfide-bonded: cysteine 54-cysteine 69, cysteine 61-cysteine 73, and cysteine 68-cysteine 78.

It belongs to the conotoxin O1 superfamily. As to expression, expressed by the venom duct.

The protein resides in the secreted. Delta-conotoxins bind to site 6 of voltage-gated sodium channels (Nav) and inhibit the inactivation process. This chain is Delta-conotoxin-like CnVIA, found in Conus consors (Singed cone).